The chain runs to 267 residues: UDP-glucose:undecaprenyl-phosphate glucose-1-phosphate transferase (267 aa).

A helical membrane pass occupies residues 83-103 (VAAALLTALFAPLLLLAALAI).

This sequence belongs to the bacterial sugar transferase family.

It is found in the cell membrane. It catalyses the reaction di-trans,octa-cis-undecaprenyl phosphate + UDP-alpha-D-glucose = alpha-D-glucosyl di-trans,octa-cis-undecaprenyl diphosphate + UMP. In terms of biological role, is likely the initiating enzyme for holdfast polysaccharide synthesis. Catalyzes the transfer of the glucose-1-phosphate moiety from UDP-Glc onto the carrier lipid undecaprenyl phosphate (C55-P), forming a phosphoanhydride bond yielding to glucosyl-pyrophosphoryl-undecaprenol (Glc-PP-C55). Also possesses a weak galactose-1-P transferase activity. The protein is UDP-glucose:undecaprenyl-phosphate glucose-1-phosphate transferase (pssY) of Caulobacter vibrioides (strain ATCC 19089 / CIP 103742 / CB 15) (Caulobacter crescentus).